The primary structure comprises 479 residues: F-box protein At5g51380 (479 aa).

The interval 1–20 (MTFREKMPTSPKSPLRRRRS) is disordered. The F-box domain occupies 62 to 108 (DRTLSLSDSLLLKILEKLPESQNEDVSLVCKRWLSVQGRRLRSMKVF).

The protein is F-box protein At5g51380 of Arabidopsis thaliana (Mouse-ear cress).